The following is a 1058-amino-acid chain: Carbamoyl phosphate synthase large chain (1058 aa).

Residues 1 to 401 (MPKRKDIKTI…SLLKAIRSLE (401 aa)) form a carboxyphosphate synthetic domain region. ATP is bound by residues R129, R169, G175, G176, K208, I210, E215, G241, I242, H243, Q284, and E298. An ATP-grasp 1 domain is found at 133 to 327 (RDLMNELNEP…IAKIAAKIAV (195 aa)). Mg(2+) contacts are provided by Q284, E298, and N300. Q284, E298, and N300 together coordinate Mn(2+). The segment at 402–546 (YGVHHLGLPN…YSTYEFENES (145 aa)) is oligomerization domain. The tract at residues 547 to 929 (TRSDKEKIVV…ALYKGLTAAG (383 aa)) is carbamoyl phosphate synthetic domain. In terms of domain architecture, ATP-grasp 2 spans 671 to 861 (EKLLIGLKIP…VANIAMQCIL (191 aa)). 10 residues coordinate ATP: R707, R746, L748, E752, G777, V778, H779, S780, Q820, and E832. Positions 820, 832, and 834 each coordinate Mg(2+). Mn(2+) contacts are provided by Q820, E832, and N834. The MGS-like domain maps to 930 to 1058 (IKIKDYGRVL…ESMSFRVQTL (129 aa)). The allosteric domain stretch occupies residues 930-1058 (IKIKDYGRVL…ESMSFRVQTL (129 aa)).

It belongs to the CarB family. Composed of two chains; the small (or glutamine) chain promotes the hydrolysis of glutamine to ammonia, which is used by the large (or ammonia) chain to synthesize carbamoyl phosphate. Tetramer of heterodimers (alpha,beta)4. Requires Mg(2+) as cofactor. Mn(2+) serves as cofactor.

The enzyme catalyses hydrogencarbonate + L-glutamine + 2 ATP + H2O = carbamoyl phosphate + L-glutamate + 2 ADP + phosphate + 2 H(+). It catalyses the reaction hydrogencarbonate + NH4(+) + 2 ATP = carbamoyl phosphate + 2 ADP + phosphate + 2 H(+). It functions in the pathway amino-acid biosynthesis; L-arginine biosynthesis; carbamoyl phosphate from bicarbonate: step 1/1. Its pathway is pyrimidine metabolism; UMP biosynthesis via de novo pathway; (S)-dihydroorotate from bicarbonate: step 1/3. Its function is as follows. Large subunit of the glutamine-dependent carbamoyl phosphate synthetase (CPSase). CPSase catalyzes the formation of carbamoyl phosphate from the ammonia moiety of glutamine, carbonate, and phosphate donated by ATP, constituting the first step of 2 biosynthetic pathways, one leading to arginine and/or urea and the other to pyrimidine nucleotides. The large subunit (synthetase) binds the substrates ammonia (free or transferred from glutamine from the small subunit), hydrogencarbonate and ATP and carries out an ATP-coupled ligase reaction, activating hydrogencarbonate by forming carboxy phosphate which reacts with ammonia to form carbamoyl phosphate. This is Carbamoyl phosphate synthase large chain from Fusobacterium nucleatum subsp. nucleatum (strain ATCC 25586 / DSM 15643 / BCRC 10681 / CIP 101130 / JCM 8532 / KCTC 2640 / LMG 13131 / VPI 4355).